A 516-amino-acid chain; its full sequence is Anaerobic nitric oxide reductase transcription regulator NorR (516 aa).

4-aspartylphosphate is present on Asp57. Positions 187 to 416 (IIGLSAPMLQ…LEHAIHRAVV (230 aa)) constitute a Sigma-54 factor interaction domain. Residues 215 to 222 (GETGTGKE) and 278 to 287 (ADNGTLFLDE) each bind ATP. Positions 482-501 (WAATARALELDVANLHRLAK) form a DNA-binding region, H-T-H motif.

It functions in the pathway nitrogen metabolism; nitric oxide reduction. Required for the expression of anaerobic nitric oxide (NO) reductase, acts as a transcriptional activator for at least the norVW operon. Activation also requires sigma-54. The polypeptide is Anaerobic nitric oxide reductase transcription regulator NorR (Klebsiella pneumoniae (strain 342)).